A 367-amino-acid chain; its full sequence is Dye-decolorizing peroxidase (367 aa).

Asp152 (proton acceptor) is an active-site residue. His225 lines the heme pocket. Residues 311–367 (DPDGELAAAEPSDAQNDDPASASARIEETDPPNPASADDPAPADDSLGIGSLRRRDQ) are disordered. The span at 345 to 356 (ASADDPAPADDS) shows a compositional bias: low complexity. Residues 358–365 (GIGSLRRR) form a targeting peptide region.

Belongs to the DyP-type peroxidase family. In terms of assembly, homohexamer. The cofactor is heme b.

Its subcellular location is the encapsulin nanocompartment. Cargo protein of a type 1 encapsulin nanocompartment. Has both general peroxidase activity and dye-decolorizing activity. Can catalyze the oxidation of both protoporphyrinogen IX and coproporphyrinogen III to their corresponding porphyrins. Also efficiently decolorizes the dyes alizarin red and Cibacron blue F3GA. This cargo-loaded encapsulin nanocompartment is probably involved in protection against oxidative damage. This is Dye-decolorizing peroxidase from Brevibacterium linens.